The following is a 360-amino-acid chain: Glycerol-1-phosphate dehydrogenase [NAD(P)+] (360 aa).

NAD(+)-binding positions include 108–112 (GRVID) and 130–133 (TAAS). Position 135 (Asp135) interacts with substrate. Ser139 is a binding site for NAD(+). Asp182 is a binding site for substrate. Asp182 and His262 together coordinate Zn(2+). His266 contributes to the substrate binding site. His278 provides a ligand contact to Zn(2+).

The protein belongs to the glycerol-1-phosphate dehydrogenase family. Requires Zn(2+) as cofactor.

It is found in the cytoplasm. It carries out the reaction sn-glycerol 1-phosphate + NAD(+) = dihydroxyacetone phosphate + NADH + H(+). The enzyme catalyses sn-glycerol 1-phosphate + NADP(+) = dihydroxyacetone phosphate + NADPH + H(+). The protein operates within membrane lipid metabolism; glycerophospholipid metabolism. In terms of biological role, catalyzes the NAD(P)H-dependent reduction of dihydroxyacetonephosphate (DHAP or glycerone phosphate) to glycerol 1-phosphate (G1P). The G1P thus generated is used as the glycerophosphate backbone of phospholipids in the cellular membranes of Archaea. The protein is Glycerol-1-phosphate dehydrogenase [NAD(P)+] of Methanoculleus marisnigri (strain ATCC 35101 / DSM 1498 / JR1).